A 344-amino-acid polypeptide reads, in one-letter code: tRNA N6-adenosine threonylcarbamoyltransferase (344 aa).

Residues His115 and His119 each coordinate Fe cation. Substrate contacts are provided by residues 137 to 141 (LVSGG), Asp170, Gly183, Asp187, and Asn276. Asp306 lines the Fe cation pocket.

It belongs to the KAE1 / TsaD family. Fe(2+) serves as cofactor.

It is found in the cytoplasm. It carries out the reaction L-threonylcarbamoyladenylate + adenosine(37) in tRNA = N(6)-L-threonylcarbamoyladenosine(37) in tRNA + AMP + H(+). Functionally, required for the formation of a threonylcarbamoyl group on adenosine at position 37 (t(6)A37) in tRNAs that read codons beginning with adenine. Is involved in the transfer of the threonylcarbamoyl moiety of threonylcarbamoyl-AMP (TC-AMP) to the N6 group of A37, together with TsaE and TsaB. TsaD likely plays a direct catalytic role in this reaction. The polypeptide is tRNA N6-adenosine threonylcarbamoyltransferase (Limosilactobacillus fermentum (strain NBRC 3956 / LMG 18251) (Lactobacillus fermentum)).